Here is a 316-residue protein sequence, read N- to C-terminus: ATP synthase gamma chain (316 aa).

Belongs to the ATPase gamma chain family. As to quaternary structure, F-type ATPases have 2 components, CF(1) - the catalytic core - and CF(0) - the membrane proton channel. CF(1) has five subunits: alpha(3), beta(3), gamma(1), delta(1), epsilon(1). CF(0) has three main subunits: a, b and c.

The protein resides in the cellular thylakoid membrane. Produces ATP from ADP in the presence of a proton gradient across the membrane. The gamma chain is believed to be important in regulating ATPase activity and the flow of protons through the CF(0) complex. In Synechococcus sp. (strain ATCC 27144 / PCC 6301 / SAUG 1402/1) (Anacystis nidulans), this protein is ATP synthase gamma chain.